The following is a 475-amino-acid chain: Ribulose bisphosphate carboxylase large chain (475 aa).

A propeptide spanning residues 1–2 (MS) is cleaved from the precursor. At P3 the chain carries N-acetylproline. Residue K14 is modified to N6,N6,N6-trimethyllysine. Substrate contacts are provided by N123 and T173. The active-site Proton acceptor is K175. K177 lines the substrate pocket. Mg(2+) contacts are provided by K201, D203, and E204. N6-carboxylysine is present on K201. The active-site Proton acceptor is the H294. Substrate-binding residues include R295, H327, and S379.

The protein belongs to the RuBisCO large chain family. Type I subfamily. In terms of assembly, heterohexadecamer of 8 large chains and 8 small chains. Requires Mg(2+) as cofactor.

Its subcellular location is the plastid. It catalyses the reaction 2 (2R)-3-phosphoglycerate + 2 H(+) = D-ribulose 1,5-bisphosphate + CO2 + H2O. It carries out the reaction D-ribulose 1,5-bisphosphate + O2 = 2-phosphoglycolate + (2R)-3-phosphoglycerate + 2 H(+). Its function is as follows. RuBisCO catalyzes two reactions: the carboxylation of D-ribulose 1,5-bisphosphate, the primary event in carbon dioxide fixation, as well as the oxidative fragmentation of the pentose substrate in the photorespiration process. Both reactions occur simultaneously and in competition at the same active site. This chain is Ribulose bisphosphate carboxylase large chain, found in Aneura mirabilis (Parasitic liverwort).